A 351-amino-acid chain; its full sequence is Homocitrate synthase (351 aa).

The Pyruvate carboxyltransferase domain maps to 23–272 (IKFCDTTLRD…KLPVDLDTTS (250 aa)).

The protein belongs to the alpha-IPM synthase/homocitrate synthase family.

The catalysed reaction is acetyl-CoA + 2-oxoglutarate + H2O = (2R)-homocitrate + CoA + H(+). Its function is as follows. This protein is a Fe-Mo-cofactor biosynthetic component. The chain is Homocitrate synthase (nifV) from Frankia alni.